The sequence spans 55 residues: Glycine-rich antimicrobial peptide Pg-AMP (55 aa).

The segment covering 18–39 (GYGGYGGGRYGGGYGSGRGQPV) has biased composition (gly residues). The interval 18-55 (GYGGYGGGRYGGGYGSGRGQPVGQGVERSHDDNRNQPR) is disordered. Residues 44–55 (ERSHDDNRNQPR) are compositionally biased toward basic and acidic residues.

As to quaternary structure, monomer and homodimer. Might act by homodimer formation.

Has antibacterial activity against the Gram-negative bacteria Klebsiella sp., Proteus sp., E.coli ATCC 8739 (MIC=72 ug/ml) and K.pneumoniae (MIC=32 ug/ml). Has no activity against the Gram-negative bacterium S.typhimurium or the Gram-positive bacterium S.aureus. Does not have antifungal activity against the human and plant pathogenic fungi F.oxysporum, A.fumigatus and R.solani. This is Glycine-rich antimicrobial peptide Pg-AMP from Psidium guajava (Guava).